The sequence spans 253 residues: DNA polymerase sliding clamp 2 (253 aa).

It belongs to the PCNA family. As to quaternary structure, homotrimer. The subunits circularize to form a toroid; DNA passes through its center. Replication factor C (RFC) is required to load the toroid on the DNA. Interacts with TIP.

Its activity is regulated as follows. Inhibited by interaction with the PCNA inhibitor TIP. Its function is as follows. Sliding clamp subunit that acts as a moving platform for DNA processing. Responsible for tethering the catalytic subunit of DNA polymerase and other proteins to DNA during high-speed replication. The chain is DNA polymerase sliding clamp 2 from Thermococcus kodakarensis (strain ATCC BAA-918 / JCM 12380 / KOD1) (Pyrococcus kodakaraensis (strain KOD1)).